Here is a 220-residue protein sequence, read N- to C-terminus: Large ribosomal subunit protein uL1 (220 aa).

The protein belongs to the universal ribosomal protein uL1 family. In terms of assembly, part of the 50S ribosomal subunit.

Binds directly to 23S rRNA. The L1 stalk is quite mobile in the ribosome, and is involved in E site tRNA release. Its function is as follows. Protein L1 is also a translational repressor protein, it controls the translation of the L11 operon by binding to its mRNA. This Ehrlichia canis (strain Jake) protein is Large ribosomal subunit protein uL1.